A 614-amino-acid polypeptide reads, in one-letter code: Leucine-rich repeat and immunoglobulin-like domain-containing nogo receptor-interacting protein 1 (614 aa).

The signal sequence occupies residues 1–35 (MLAGGVRSMPSPLLACWQPILLLVLGSVLSGSATG). Cystine bridges form between Cys-36–Cys-42 and Cys-40–Cys-51. The LRRNT domain maps to 36–65 (CPPRCECSAQDRAVLCHRKRFVAVPEGIPT). Over 36–555 (CPPRCECSAQ…FDIKTLIIAT (520 aa)) the chain is Extracellular. LRR repeat units follow at residues 66 to 87 (ETRLLDLGKNRIKTLNQDEFAS), 90 to 111 (HLEELELNENIVSAVEPGAFNN), 114 to 135 (NLRTLGLRSNRLKLIPLGVFTG), 138 to 159 (NLTKLDISENKIVILLDYMFQD), 162 to 183 (NLKSLEVGDNDLVYISHRAFSG), 186 to 207 (SLEQLTLEKCNLTSIPTEALSH), 210 to 231 (GLIVLRLRHLNINAIRDYSFKR), 258 to 279 (NLTSLSITHCNLTAVPYLAVRH), 282 to 303 (YLRFLNLSYNPISTIEGSMLHE), 306 to 327 (RLQEIQLVGGQLAVVEPYAFRG), and 330 to 351 (YLRVLNVSGNQLTTLEESVFHS). N-linked (GlcNAc...) asparagine glycosylation occurs at Asn-138. Asn-196 is a glycosylation site (N-linked (GlcNAc...) asparagine). N-linked (GlcNAc...) asparagine glycans are attached at residues Asn-258, Asn-268, and Asn-287. An N-linked (GlcNAc...) asparagine glycan is attached at Asn-335. Residues 363–417 (NPLACDCRLLWVFRRRWRLNFNRQQPTCATPEFVQGKEFKDFPDVLLPNYFTCRR) form the LRRCT domain. Cystine bridges form between Cys-367/Cys-390, Cys-369/Cys-415, and Cys-440/Cys-491. An Ig-like C2-type domain is found at 405 to 507 (PDVLLPNYFT…GNDSMPAHLH (103 aa)). 4 N-linked (GlcNAc...) asparagine glycosylation sites follow: Asn-486, Asn-499, Asn-520, and Asn-536. The chain crosses the membrane as a helical span at residues 556-576 (TMGFISFLGVVLFCLVLLFLW). At 577–614 (SRGKGNTKHNIEIEYVPRKSDAGISSADAPRKFNMKMI) the chain is on the cytoplasmic side. Ser-596 carries the phosphoserine modification.

As to quaternary structure, homotetramer. Forms a ternary complex with RTN4R/NGFR and RTN4R/TNFRSF19. Interacts with NGRF, RTN4R and MYT1L. N-glycosylated. Contains predominantly high-mannose glycans.

It localises to the cell membrane. Its function is as follows. Functional component of the Nogo receptor signaling complex (RTN4R/NGFR) in RhoA activation responsible for some inhibition of axonal regeneration by myelin-associated factors. Is also an important negative regulator of oligodentrocyte differentiation and axonal myelination. Acts in conjunction with RTN4 and RTN4R in regulating neuronal precursor cell motility during cortical development. The polypeptide is Leucine-rich repeat and immunoglobulin-like domain-containing nogo receptor-interacting protein 1 (LINGO1) (Pongo abelii (Sumatran orangutan)).